The following is a 353-amino-acid chain: Polyprenal reductase 2 (353 aa).

The next 6 helical transmembrane spans lie at 11–31, 78–98, 175–195, 234–254, 291–308, and 313–335; these read PLLCFAWIAATLPIIAAALPI, FMHFYVVGVLATTILLLAIWF, MHIVGYLTGLFYYVAAPLSLA, PLLKLGWTQWIGAVIFIWGSL, YLAELVIYFGMLVASGAE, and WFLFIFVITNLSFAAVETYNWYL.

Belongs to the steroid 5-alpha reductase family. Polyprenal reductase subfamily.

Its subcellular location is the cell membrane. The catalysed reaction is a di-trans,poly-cis-dolichal + NADP(+) = a di-trans,poly-cis-polyprenal + NADPH + H(+). Its pathway is protein modification; protein glycosylation. In terms of biological role, plays a key role in early steps of protein N-linked glycosylation by being involved in the conversion of polyprenol into dolichol. Acts as a polyprenal reductase that mediates the reduction of polyprenal into dolichal in a NADP-dependent mechanism. Dolichols are required for the synthesis of dolichol-linked monosaccharides and the oligosaccharide precursor used for N-glycosylation. The sequence is that of Polyprenal reductase 2 from Oryza sativa subsp. japonica (Rice).